The primary structure comprises 272 residues: Undecaprenyl-diphosphatase (272 aa).

7 consecutive transmembrane segments (helical) span residues 39 to 59, 87 to 107, 113 to 133, 145 to 165, 188 to 208, 220 to 240, and 251 to 271; these read SGLT…FVYF, WMIV…EQPI, SSPL…GLTD, ITLG…VPGV, FSFL…GLHL, PMLV…AFLL, and FVWY…VGLL.

It belongs to the UppP family.

It is found in the cell inner membrane. It catalyses the reaction di-trans,octa-cis-undecaprenyl diphosphate + H2O = di-trans,octa-cis-undecaprenyl phosphate + phosphate + H(+). Its function is as follows. Catalyzes the dephosphorylation of undecaprenyl diphosphate (UPP). Confers resistance to bacitracin. The sequence is that of Undecaprenyl-diphosphatase from Trichlorobacter lovleyi (strain ATCC BAA-1151 / DSM 17278 / SZ) (Geobacter lovleyi).